The sequence spans 523 residues: Leghemoglobin reductase (523 aa).

The transit peptide at 1-30 directs the protein to the mitochondrion; sequence MAMASLARRKAYAVVSSSRSSVFLTSLRGF. Residues 66–75, Lys84, Gly148, and 177–179 contribute to the FAD site; these read EKRGTLGGTC and TGS. A disulfide bridge connects residues Cys75 and Cys80. NAD(+) is bound by residues 214 to 221, Glu237, Val271, and Gly306; that span reads GAGYIGLE. Residues Asp347 and 353–356 contribute to the FAD site; that span reads MLAH. His479 acts as the Proton acceptor in catalysis.

This sequence belongs to the class-I pyridine nucleotide-disulfide oxidoreductase family. In terms of assembly, homodimer. It depends on FAD as a cofactor.

It is found in the mitochondrion. It carries out the reaction 2 Fe(III)-[leghemoglobin] + NADH = 2 Fe(II)-[leghemoglobin] + NAD(+) + H(+). The enzyme catalyses 2 Fe(III)-[leghemoglobin] + NADPH = 2 Fe(II)-[leghemoglobin] + NADP(+) + H(+). In terms of biological role, reduces ferric leghemoglobin (Lb) to ferrous Lb. The protein is Leghemoglobin reductase (FLBR) of Vigna unguiculata (Cowpea).